Consider the following 179-residue polypeptide: Large ribosomal subunit protein uL5 (179 aa).

It belongs to the universal ribosomal protein uL5 family. As to quaternary structure, part of the 50S ribosomal subunit; part of the 5S rRNA/L5/L18/L25 subcomplex. Contacts the 5S rRNA and the P site tRNA. Forms a bridge to the 30S subunit in the 70S ribosome.

Its function is as follows. This is one of the proteins that bind and probably mediate the attachment of the 5S RNA into the large ribosomal subunit, where it forms part of the central protuberance. In the 70S ribosome it contacts protein S13 of the 30S subunit (bridge B1b), connecting the 2 subunits; this bridge is implicated in subunit movement. Contacts the P site tRNA; the 5S rRNA and some of its associated proteins might help stabilize positioning of ribosome-bound tRNAs. This is Large ribosomal subunit protein uL5 from Clostridium perfringens (strain ATCC 13124 / DSM 756 / JCM 1290 / NCIMB 6125 / NCTC 8237 / Type A).